Here is a 356-residue protein sequence, read N- to C-terminus: 1-acyl-sn-glycerol-3-phosphate acyltransferase LPAT1, chloroplastic (356 aa).

Residues 1–56 (MDVASARSISSHPSYYGKPICSSQSSLIRISRDKVCCFGRISNGMTSFTTSLHAVP) constitute a chloroplast transit peptide. The helical transmembrane segment at 127–147 (GIFFCVVAGISATFLIVLMII) threads the bilayer. The HXXXXD motif signature appears at 202–207 (HQSFLD). A helical membrane pass occupies residues 224 to 244 (TGIFVIPIIGWAMSMMGVVPL).

It belongs to the 1-acyl-sn-glycerol-3-phosphate acyltransferase family. Widely expressed. Expressed at higher level in leaves. Expressed at lower level in silique walls compared to leaves.

The protein localises to the plastid. It is found in the chloroplast membrane. It carries out the reaction a fatty acyl-[ACP] + a 1-acyl-sn-glycero-3-phosphate = a 1,2-diacyl-sn-glycero-3-phosphate + holo-[ACP]. The catalysed reaction is a 1-acyl-sn-glycero-3-phosphate + an acyl-CoA = a 1,2-diacyl-sn-glycero-3-phosphate + CoA. The protein operates within phospholipid metabolism; CDP-diacylglycerol biosynthesis; CDP-diacylglycerol from sn-glycerol 3-phosphate: step 2/3. Plastidial enzyme of the prokaryotic glycerol-3-phosphate pathway that converts lysophosphatidic acid (LPA) into phosphatidic acid by incorporating an acyl moiety at position sn-2. Utilizes palmitoyl-ACP (16:0-ACP) to produce phosphatidic acid containing a saturated group at position sn-2, which is characteristic of lipids synthesized by the prokaryotic pathway. In vitro, can use 16:0-CoA as acyl donor. Essential for embryo development during the transition from the globular to the heart stage when chloroplasts begin to form. This chain is 1-acyl-sn-glycerol-3-phosphate acyltransferase LPAT1, chloroplastic, found in Arabidopsis thaliana (Mouse-ear cress).